A 299-amino-acid chain; its full sequence is Probable adenylate kinase 7, mitochondrial (299 aa).

Residues 1–25 (MAGVLRLAGAARSPLARALAPAARR) constitute a mitochondrion transit peptide. 80-85 (GPQKHA) is a binding site for ATP. Positions 100–129 (SMGTLVRQELSPASSLYKKIANSVNEGKLV) are NMP. AMP contacts are provided by residues R106, 127–129 (KLV), 157–160 (GIPR), and Q164. ATP is bound by residues R190 and 203-204 (LF). An LID region spans residues 193 to 237 (GGDICPHCGQLFDFSKTASSDRNPSLGSCTWPSQVQHAAVLGLED).

Belongs to the adenylate kinase family.

It localises to the mitochondrion. It carries out the reaction AMP + ATP = 2 ADP. In terms of biological role, catalyzes the reversible transfer of the terminal phosphate group between ATP and AMP. Plays an important role in cellular energy homeostasis and in adenine nucleotide metabolism. This is Probable adenylate kinase 7, mitochondrial from Oryza sativa subsp. japonica (Rice).